The sequence spans 436 residues: Histidinol dehydrogenase (436 aa).

Positions 135, 196, and 219 each coordinate NAD(+). 3 residues coordinate substrate: Ser242, Gln264, and His267. Zn(2+) contacts are provided by Gln264 and His267. Residues Glu332 and His333 each act as proton acceptor in the active site. Residues His333, Asp366, Glu420, and His425 each coordinate substrate. Asp366 is a binding site for Zn(2+). Residue His425 coordinates Zn(2+).

Belongs to the histidinol dehydrogenase family. The cofactor is Zn(2+).

The enzyme catalyses L-histidinol + 2 NAD(+) + H2O = L-histidine + 2 NADH + 3 H(+). It functions in the pathway amino-acid biosynthesis; L-histidine biosynthesis; L-histidine from 5-phospho-alpha-D-ribose 1-diphosphate: step 9/9. Functionally, catalyzes the sequential NAD-dependent oxidations of L-histidinol to L-histidinaldehyde and then to L-histidine. This Methylococcus capsulatus (strain ATCC 33009 / NCIMB 11132 / Bath) protein is Histidinol dehydrogenase.